Reading from the N-terminus, the 455-residue chain is Kynurenine--oxoglutarate transaminase 3 (455 aa).

Gly72 contributes to the substrate binding site. Lys117 is subject to N6-acetyllysine; alternate. N6-succinyllysine; alternate is present on Lys117. Asn219 contacts substrate. Lys281 is subject to N6-(pyridoxal phosphate)lysine. Substrate is bound at residue Arg430.

Belongs to the class-I pyridoxal-phosphate-dependent aminotransferase family. Homodimer. Requires pyridoxal 5'-phosphate as cofactor. As to expression, widely expressed, with higher expression levels in liver, kidney, heart and neuroendocrine tissues.

The catalysed reaction is L-kynurenine + 2-oxoglutarate = kynurenate + L-glutamate + H2O. It catalyses the reaction L-kynurenine + glyoxylate = kynurenate + glycine + H2O. It carries out the reaction 3-hydroxy-L-kynurenine + glyoxylate = xanthurenate + glycine + H2O. The enzyme catalyses an S-substituted L-cysteine + H2O = a thiol + pyruvate + NH4(+). The protein operates within amino-acid degradation; L-kynurenine degradation; kynurenate from L-kynurenine: step 1/2. Its activity is regulated as follows. Kynurenine transamination is competitively inhibited by cysteine, glutamine, histidine, methionine, leucine, or phenylalanine. In terms of biological role, catalyzes the irreversible transamination of the L-tryptophan metabolite L-kynurenine to form kynurenic acid (KA), an intermediate in the tryptophan catabolic pathway which is also a broad spectrum antagonist of the three ionotropic excitatory amino acid receptors among others. May catalyze the beta-elimination of S-conjugates and Se-conjugates of L-(seleno)cysteine, resulting in the cleavage of the C-S or C-Se bond. Has transaminase activity towards L-kynurenine, tryptophan, phenylalanine, serine, cysteine, methionine, histidine, glutamine and asparagine with glyoxylate as an amino group acceptor (in vitro). Has lower activity with 2-oxoglutarate as amino group acceptor (in vitro). The chain is Kynurenine--oxoglutarate transaminase 3 (Kyat3) from Mus musculus (Mouse).